The following is a 184-amino-acid chain: Type-1 fimbrial protein, A chain (184 aa).

A signal peptide spans 1 to 23 (MKIKTLAIVVLSALSLSSTAALA). Cys-46 and Cys-86 are oxidised to a cystine.

Belongs to the fimbrial protein family.

Its subcellular location is the fimbrium. Its function is as follows. Fimbriae (also called pili), polar filaments radiating from the surface of the bacterium to a length of 0.5-1.5 micrometers and numbering 100-300 per cell, enable bacteria to colonize the epithelium of specific host organs. The protein is Type-1 fimbrial protein, A chain of Escherichia coli.